Reading from the N-terminus, the 282-residue chain is MTLLDGKALSAKIKEELKEKNQFLKSKGIESCLAVILVGDDPASQTYVKSKAKACEECGIKSLVYHLNENTTQNELLALINTLNHDDSVHGILVQLPLPDHICKDLILESIISSKDVDGFHPINVGYLNLGLESGFLPCTPLGVMKLLKAYEIDLEGKDAVIIGASNIVGRPMATMLLNAGATVSVCHIKTKDLSLYTRQADLIIVAAGCVNLLRSDMVKEGVIVIDVGINRLESGKIVGDVDFEEVSKKSSYITPVPGGVGPMTIAMLLENTVKSAKNRLN.

Residues 164 to 166 (GAS), Ile-189, and Ile-230 each bind NADP(+).

This sequence belongs to the tetrahydrofolate dehydrogenase/cyclohydrolase family. As to quaternary structure, homodimer.

The catalysed reaction is (6R)-5,10-methylene-5,6,7,8-tetrahydrofolate + NADP(+) = (6R)-5,10-methenyltetrahydrofolate + NADPH. It carries out the reaction (6R)-5,10-methenyltetrahydrofolate + H2O = (6R)-10-formyltetrahydrofolate + H(+). It functions in the pathway one-carbon metabolism; tetrahydrofolate interconversion. Its function is as follows. Catalyzes the oxidation of 5,10-methylenetetrahydrofolate to 5,10-methenyltetrahydrofolate and then the hydrolysis of 5,10-methenyltetrahydrofolate to 10-formyltetrahydrofolate. The sequence is that of Bifunctional protein FolD from Campylobacter jejuni (strain RM1221).